The sequence spans 172 residues: RNA silencing suppressor p19 (172 aa).

The segment covering 1–20 (MERAIQGNDAREQANSERWD) has biased composition (basic and acidic residues). Positions 1–38 (MERAIQGNDAREQANSERWDGGSGGTTSPFKLPDESPS) are disordered.

It belongs to the tombusviruses protein p19 family. As to quaternary structure, homodimer.

Acts as a suppressor of RNA-mediated gene silencing, also known as post-transcriptional gene silencing (PTGS), a mechanism of plant viral defense that limits the accumulation of viral RNAs. Binds to short interfering RNAs (siRNAs) with high affinity. Acts as a molecular caliper to specifically select siRNAs based on the length of the duplex region of the RNA. The sequence is that of RNA silencing suppressor p19 from Capsicum annuum (Capsicum pepper).